A 196-amino-acid polypeptide reads, in one-letter code: Lipoprotein signal peptidase (196 aa).

3 helical membrane passes run 17 to 37 (SIII…IDNL), 73 to 93 (SNAI…YLMI), and 96 to 116 (NTIG…GNLI). Residues aspartate 126 and aspartate 144 contribute to the active site. The helical transmembrane segment at 135–155 (YSFPVFNLADCFITIGVIILI) threads the bilayer.

It belongs to the peptidase A8 family.

It is found in the cell inner membrane. The catalysed reaction is Release of signal peptides from bacterial membrane prolipoproteins. Hydrolyzes -Xaa-Yaa-Zaa-|-(S,diacylglyceryl)Cys-, in which Xaa is hydrophobic (preferably Leu), and Yaa (Ala or Ser) and Zaa (Gly or Ala) have small, neutral side chains.. Its pathway is protein modification; lipoprotein biosynthesis (signal peptide cleavage). Its function is as follows. This protein specifically catalyzes the removal of signal peptides from prolipoproteins. In Rickettsia akari (strain Hartford), this protein is Lipoprotein signal peptidase.